Here is a 161-residue protein sequence, read N- to C-terminus: RNA pyrophosphohydrolase (161 aa).

Residues 12 to 154 (PYRPGVGMMI…KRKLYQAVVK (143 aa)) enclose the Nudix hydrolase domain. The Nudix box motif lies at 46 to 67 (GGIVPGETPSIAAMREMLEEIG).

It belongs to the Nudix hydrolase family. RppH subfamily. A divalent metal cation serves as cofactor.

In terms of biological role, accelerates the degradation of transcripts by removing pyrophosphate from the 5'-end of triphosphorylated RNA, leading to a more labile monophosphorylated state that can stimulate subsequent ribonuclease cleavage. The protein is RNA pyrophosphohydrolase of Rickettsia bellii (strain OSU 85-389).